We begin with the raw amino-acid sequence, 812 residues long: Lon protease (812 aa).

One can recognise a Lon N-terminal domain in the interval 12 to 205 (LPMLPLRGVL…YLCELLAKEM (194 aa)). 357–364 (GPPGVGKT) is a binding site for ATP. Residues 593–774 (ENQVGVATGL…DEVLEETLLK (182 aa)) form the Lon proteolytic domain. Active-site residues include S680 and K723.

It belongs to the peptidase S16 family. Homohexamer. Organized in a ring with a central cavity.

The protein resides in the cytoplasm. The catalysed reaction is Hydrolysis of proteins in presence of ATP.. Functionally, ATP-dependent serine protease that mediates the selective degradation of mutant and abnormal proteins as well as certain short-lived regulatory proteins. Required for cellular homeostasis and for survival from DNA damage and developmental changes induced by stress. Degrades polypeptides processively to yield small peptide fragments that are 5 to 10 amino acids long. Binds to DNA in a double-stranded, site-specific manner. In Syntrophomonas wolfei subsp. wolfei (strain DSM 2245B / Goettingen), this protein is Lon protease.